The following is a 619-amino-acid chain: Coagulation factor X-activating enzyme heavy chain (619 aa).

Residues 1-20 (MMQVLLVTISLAVFPYQGSS) form the signal peptide. The propeptide occupies 21–188 (IILESGNVND…SDKPIKKASQ (168 aa)). A Peptidase M12B domain is found at 199–393 (IFIELVIIVD…YKPKCIFNPP (195 aa)). Cys-215 and Cys-251 are joined by a disulfide. Asn-216 and Asn-257 each carry an N-linked (GlcNAc...) (complex) asparagine glycan. 3 disulfides stabilise this stretch: Cys-308/Cys-388, Cys-348/Cys-372, and Cys-350/Cys-355. Position 333 (His-333) interacts with Zn(2+). Glu-334 is an active-site residue. Zn(2+)-binding residues include His-337 and His-343. 2 N-linked (GlcNAc...) (complex) asparagine glycosylation sites follow: Asn-351 and Asn-371. In terms of domain architecture, Disintegrin spans 401–487 (PPVCGNEIWE…ECPRDQLQQN (87 aa)). Ca(2+) contacts are provided by Val-403, Asn-406, Ile-408, Glu-410, Glu-413, and Asp-416. Cystine bridges form between Cys-404–Cys-433, Cys-415–Cys-428, Cys-417–Cys-423, Cys-427–Cys-450, Cys-441–Cys-447, Cys-446–Cys-472, Cys-459–Cys-479, Cys-466–Cys-498, Cys-491–Cys-503, Cys-510–Cys-560, Cys-525–Cys-571, Cys-538–Cys-548, Cys-555–Cys-597, and Cys-591–Cys-603. The D/ECD-tripeptide motif lies at 465 to 467 (ECD). The Ca(2+) site is built by Asp-467, Val-468, Glu-470, Asp-482, and Gln-483.

It belongs to the venom metalloproteinase (M12B) family. P-III subfamily. P-IIId sub-subfamily. As to quaternary structure, heterotrimer; disulfide-linked. The heterotrimer consists of 1 heavy chain and 2 light chains (lectins): LC1 and LC2. The cofactor is Zn(2+). N-glycosylated; probably required for conformation. Removal of easily accessible sugars does not change its functional capacity, but removal of the core sugars with N-glycanase causes a virtually complete loss of enzyme activity, apparently as a result of major conformational changes in the molecule. Not O-glycosylated. In terms of tissue distribution, expressed by the venom gland.

The protein resides in the secreted. The enzyme catalyses Specifically activates several components of the blood clotting system, including coagulation factor X, coagulation factor IX and protein C by cleavage of Arg-|-Xaa bonds. Has no action on insulin B chain.. In terms of biological role, catalytic subunit of blood coagulation factor X-activating enzyme. Activates coagulation factor X (F10) by cleaving the Arg-Ile bond and is also able to activate coagulation factor IX (F9) and protein S (PROS1) by specific cleavage of Arg-Ile and Arg-Val bonds. The protein is Coagulation factor X-activating enzyme heavy chain of Daboia siamensis (Eastern Russel's viper).